The chain runs to 343 residues: Aspartate carbamoyltransferase catalytic subunit (343 aa).

Arginine 91 and threonine 92 together coordinate carbamoyl phosphate. Position 119 (lysine 119) interacts with L-aspartate. Carbamoyl phosphate is bound by residues arginine 141, histidine 171, and glutamine 174. 2 residues coordinate L-aspartate: arginine 204 and arginine 259. Residues glycine 300 and proline 301 each coordinate carbamoyl phosphate.

Belongs to the aspartate/ornithine carbamoyltransferase superfamily. ATCase family. Heterododecamer (2C3:3R2) of six catalytic PyrB chains organized as two trimers (C3), and six regulatory PyrI chains organized as three dimers (R2).

The catalysed reaction is carbamoyl phosphate + L-aspartate = N-carbamoyl-L-aspartate + phosphate + H(+). Its pathway is pyrimidine metabolism; UMP biosynthesis via de novo pathway; (S)-dihydroorotate from bicarbonate: step 2/3. Catalyzes the condensation of carbamoyl phosphate and aspartate to form carbamoyl aspartate and inorganic phosphate, the committed step in the de novo pyrimidine nucleotide biosynthesis pathway. This Burkholderia vietnamiensis (strain G4 / LMG 22486) (Burkholderia cepacia (strain R1808)) protein is Aspartate carbamoyltransferase catalytic subunit.